The sequence spans 514 residues: Extracellular exo-inulinase (514 aa).

Positions M1 to S18 are cleaved as a signal peptide. Residues N33–D34 and Q52 contribute to the substrate site. The active-site Nucleophile is D34. N56 is a glycosylation site (N-linked (GlcNAc...) asparagine). Positions 60 and 95 each coordinate substrate. 2 N-linked (GlcNAc...) asparagine glycosylation sites follow: N104 and N110. A substrate-binding site is contributed by R162–D163. N-linked (GlcNAc...) asparagine glycosylation is found at N197 and N203. The substrate site is built by E214 and W300. E214 serves as the catalytic Proton donor/acceptor. Residues N357, N371, N389, and N422 are each glycosylated (N-linked (GlcNAc...) asparagine).

It belongs to the glycosyl hydrolase 32 family.

The protein localises to the secreted. The catalysed reaction is Hydrolysis of terminal, non-reducing (2-&gt;1)- and (2-&gt;6)-linked beta-D-fructofuranose residues in fructans.. In terms of biological role, exo-inulinase involved in utilization of the plant storage polymer inulin, consisting of fructooligosaccharides with a degree of polymerization (DP) value from 2 to 60. Splits off terminal fructose units successively from the non-reducing end of the inulin molecule. The protein is Extracellular exo-inulinase of Meyerozyma guilliermondii (strain ATCC 6260 / CBS 566 / DSM 6381 / JCM 1539 / NBRC 10279 / NRRL Y-324) (Yeast).